Here is a 232-residue protein sequence, read N- to C-terminus: Small ribosomal subunit protein uS2 (232 aa).

It belongs to the universal ribosomal protein uS2 family.

This is Small ribosomal subunit protein uS2 from Desulforamulus reducens (strain ATCC BAA-1160 / DSM 100696 / MI-1) (Desulfotomaculum reducens).